Here is a 405-residue protein sequence, read N- to C-terminus: uncharacterized protein (405 aa).

The next 12 helical transmembrane spans lie at 19–39, 47–67, 85–105, 129–149, 157–177, 178–198, 224–244, 252–272, 283–303, 309–329, 344–364, and 366–386; these read ILSI…PLAV, VMGF…FATL, IVVF…TAGL, SFAG…LHIG, IVTY…YHWG, GLQA…LLAI, GMAL…ITLF, GAAF…LLFP, VAMI…VATM, IGVL…GVVA, TYTV…GLVM, and WAGV…ALLL.

It belongs to the major facilitator superfamily. YhhS family.

The protein localises to the cell inner membrane. This is an uncharacterized protein from Escherichia coli O157:H7.